The primary structure comprises 31 residues: Cytochrome b6-f complex subunit 6 (31 aa).

A helical transmembrane segment spans residues 3 to 23; that stretch reads ILIGYIILLACAFGLAAGLFF.

The protein belongs to the PetL family. As to quaternary structure, the 4 large subunits of the cytochrome b6-f complex are cytochrome b6, subunit IV (17 kDa polypeptide, PetD), cytochrome f and the Rieske protein, while the 4 small subunits are PetG, PetL, PetM and PetN. The complex functions as a dimer.

The protein localises to the plastid. It localises to the chloroplast thylakoid membrane. Component of the cytochrome b6-f complex, which mediates electron transfer between photosystem II (PSII) and photosystem I (PSI), cyclic electron flow around PSI, and state transitions. PetL is important for photoautotrophic growth as well as for electron transfer efficiency and stability of the cytochrome b6-f complex. This is Cytochrome b6-f complex subunit 6 from Rhodomonas salina (Cryptomonas salina).